The following is a 252-amino-acid chain: Thiamine thiazole synthase (252 aa).

NAD(+) is bound by residues S35, 54 to 55, G62, V126, and 152 to 154; these read EK and HVD. Fe cation contacts are provided by D154 and H169. An NAD(+)-binding site is contributed by M217. Position 227 (R227) interacts with glycine.

Belongs to the THI4 family. Homooctamer; tetramer of dimers. Fe(2+) is required as a cofactor.

The catalysed reaction is hydrogen sulfide + glycine + NAD(+) = ADP-5-ethyl-4-methylthiazole-2-carboxylate + nicotinamide + 3 H2O + H(+). Its pathway is cofactor biosynthesis; thiamine diphosphate biosynthesis. In terms of biological role, involved in the biosynthesis of the thiazole moiety of thiamine. Catalyzes the conversion of NAD and glycine to adenosine diphosphate 5-(2-hydroxyethyl)-4-methylthiazole-2-carboxylate (ADT), an adenylated thiazole intermediate, using free sulfide as a source of sulfur. In Pyrococcus furiosus (strain ATCC 43587 / DSM 3638 / JCM 8422 / Vc1), this protein is Thiamine thiazole synthase.